We begin with the raw amino-acid sequence, 208 residues long: MLVQITALAFLAGIASAGVVVGGYGDGVGVGLGGLGGGLGGVGVGLGGVGVVGGGHGVVDLHTPAHYQFKYGVEDHRTGDRKQQAEVRVGDVVKGEYSLAEPDGTVRVVKYTADDHNGFNAVVSRVGHAVHPQVLVRKAVVPVATHGVVGVGGLGGLGGVGLGGVGLGGVGLGGGLGGVGLLGGRGGLDRGILGGHGGSELKFKRALI.

The signal sequence occupies residues 1–17; that stretch reads MLVQITALAFLAGIASA. Residues 34-43 form repeat 1; it reads GLGGGLGGVG. The 2 X 10 AA repeats stretch occupies residues 34–180; the sequence is GLGGGLGGVG…GLGGGLGGVG (147 aa). One can recognise a Chitin-binding type R&amp;R domain in the interval 64 to 135; sequence PAHYQFKYGV…VGHAVHPQVL (72 aa). Repeat unit 2 spans residues 171–180; the sequence is GLGGGLGGVG.

In terms of tissue distribution, epidermal regions synthesizing hard cuticle.

Cuticular proteins play a significant role in determining the physical properties of cuticles. This is Adult-specific cuticular protein ACP-20 (ACP20) from Tenebrio molitor (Yellow mealworm beetle).